Reading from the N-terminus, the 67-residue chain is Archaeal histone HAN1 subunit A (67 aa).

2 interaction with DNA regions span residues 20–22 (RVS) and 54–57 (KTVK).

This sequence belongs to the archaeal histone HMF family. As to quaternary structure, heterodimer. Dimers then assemble into higher oligomers, with the DNA wrapped around the protein core.

It localises to the cytoplasm. The protein localises to the chromosome. Functionally, binds and compact DNA (95 to 150 base pairs) to form nucleosome-like structures that contain positive DNA supercoils. Increases the resistance of DNA to thermal denaturation (in vitro). This chain is Archaeal histone HAN1 subunit A (han1A), found in Thermococcus zilligii.